Here is a 93-residue protein sequence, read N- to C-terminus: Phosphoribosyl-ATP pyrophosphatase (93 aa).

Belongs to the PRA-PH family.

It localises to the cytoplasm. It carries out the reaction 1-(5-phospho-beta-D-ribosyl)-ATP + H2O = 1-(5-phospho-beta-D-ribosyl)-5'-AMP + diphosphate + H(+). It participates in amino-acid biosynthesis; L-histidine biosynthesis; L-histidine from 5-phospho-alpha-D-ribose 1-diphosphate: step 2/9. The polypeptide is Phosphoribosyl-ATP pyrophosphatase (Mycobacterium leprae (strain Br4923)).